Consider the following 252-residue polypeptide: Carbonic anhydrase (252 aa).

Positions 1-26 (MPRFPRTLPRLTAVLLLACTAFSAAA) are cleaved as a signal peptide. Residues 31-252 (THWGYTGHDS…QPLNARVVIE (222 aa)) form the Alpha-carbonic anhydrase domain. A disulfide bridge connects residues Cys-54 and Cys-207. Residue His-92 is the Proton acceptor of the active site. Zn(2+) is bound by residues His-118, His-120, and His-137. 203-204 (TT) is a substrate binding site.

The protein belongs to the alpha-carbonic anhydrase family. As to quaternary structure, homodimer. Zn(2+) serves as cofactor.

It localises to the periplasm. The enzyme catalyses hydrogencarbonate + H(+) = CO2 + H2O. In terms of biological role, reversible hydration of carbon dioxide. The chain is Carbonic anhydrase (cah) from Neisseria gonorrhoeae.